Here is a 307-residue protein sequence, read N- to C-terminus: MAGGRDRGDLAARQLVFLLPEYLKDASRKSKSGLLFVKLVNPHSGEGATYLIDACLQKLFEIKVFKEKHHSWFINQSVQSGGLLHFATPMDPLFLLLHYLIKAGKEGKYQPLDQVVVDDKFPDCTLLLRFPELEKSLRHVTEEKEVNSKKYYKYSTEKTLKWLEKKVNQTVAALKANHVNVGARVQSSAYFSGVQVSRDKEEDYVRYAHGLISDYIPKELSDDLSKLLKLPEPPASLPNPPAKKLKLADEPVEAKEDYTKFNTKDLKNGKKNSKMTAAQKALAKVDKSGMKSIDAFFGAKNKKTGKI.

Ala-2 bears the N-acetylalanine mark. Lys-291 bears the N6-acetyllysine mark. Ser-292 is modified (phosphoserine).

Belongs to the RNase H2 subunit B family. The RNase H2 complex is a heterotrimer composed of the catalytic subunit RNASEH2A and the non-catalytic subunits RNASEH2B and RNASEH2C.

It localises to the nucleus. In terms of biological role, non catalytic subunit of RNase H2, an endonuclease that specifically degrades the RNA of RNA:DNA hybrids. Participates in DNA replication, possibly by mediating the removal of lagging-strand Okazaki fragment RNA primers during DNA replication. Mediates the excision of single ribonucleotides from DNA:RNA duplexes. In Rattus norvegicus (Rat), this protein is Ribonuclease H2 subunit B (Rnaseh2b).